A 281-amino-acid polypeptide reads, in one-letter code: Protein-S-isoprenylcysteine O-methyltransferase (281 aa).

The Cytoplasmic segment spans residues 1-2; that stretch reads ML. Residues 3–29 traverse the membrane as a helical segment; that stretch reads SPAGKISLQSFTGSSLVFFVICMFNHY. Topologically, residues 30–35 are lumenal; it reads YGITNL. Residues 36 to 53 form a helical membrane-spanning segment; it reads VVNTLIVFFYAVNVYFFL. The Cytoplasmic segment spans residues 54–58; the sequence is KFFYN. The chain crosses the membrane as a helical span at residues 59–85; sequence EFAFAIAIRAAFLGLVLVLGLYIKLVA. Residues 86-88 are Lumenal-facing; sequence PPN. A helical membrane pass occupies residues 89-113; it reads IQIFGGYMSVMALFHYSEFLAIAIV. Residues 114-118 are Cytoplasmic-facing; the sequence is QPKQV. A helical transmembrane segment spans residues 119–149; sequence STDSFVINHSPQYTIAAVSSWVEFFIETYFF. Over 150 to 155 the chain is Lumenal; the sequence is PGLKEI. The chain crosses the membrane as a helical span at residues 156–181; the sequence is HWLSNIGLCVCILGEVLRKTAILTAG. Residues 182–208 are Cytoplasmic-facing; sequence SNFNHLVQCEKSSDHVLVTHGVYAWFR. Residues glutamine 189, 196-199, tyrosine 204, and 209-212 contribute to the S-adenosyl-L-methionine site; these read HVLV and HPSY. The chain crosses the membrane as a helical span at residues 209–226; it reads HPSYVGWFYWSIGTQIIL. Over 227–229 the chain is Lumenal; the sequence is INP. The chain crosses the membrane as a helical span at residues 230-243; it reads LCIPAYTLASWMFF. Topologically, residues 244–281 are cytoplasmic; that stretch reads KERIYIEESMLLSFFGQQYCDYQQQVGTGIPFIEGYKI. Residue arginine 246 coordinates substrate. Glutamate 250 is an S-adenosyl-L-methionine binding site.

The protein belongs to the class VI-like SAM-binding methyltransferase superfamily. Isoprenylcysteine carboxyl methyltransferase family.

It localises to the endoplasmic reticulum membrane. The catalysed reaction is [protein]-C-terminal S-[(2E,6E)-farnesyl]-L-cysteine + S-adenosyl-L-methionine = [protein]-C-terminal S-[(2E,6E)-farnesyl]-L-cysteine methyl ester + S-adenosyl-L-homocysteine. Functionally, catalyzes the post-translational methylation of isoprenylated C-terminal cysteine residues. The protein is Protein-S-isoprenylcysteine O-methyltransferase of Tribolium castaneum (Red flour beetle).